The following is a 193-amino-acid chain: Corrinoid adenosyltransferase (193 aa).

Residues 10 to 18, K28, 137 to 142, and N163 contribute to the ATP site; these read TRTGDDGTT and RRAERS.

It belongs to the Cob(I)alamin adenosyltransferase family.

It is found in the cytoplasm. It carries out the reaction 2 cob(II)yrinate a,c diamide + reduced [electron-transfer flavoprotein] + 2 ATP = 2 adenosylcob(III)yrinate a,c-diamide + 2 triphosphate + oxidized [electron-transfer flavoprotein] + 3 H(+). The catalysed reaction is 2 cob(II)alamin + reduced [electron-transfer flavoprotein] + 2 ATP = 2 adenosylcob(III)alamin + 2 triphosphate + oxidized [electron-transfer flavoprotein] + 3 H(+). It functions in the pathway cofactor biosynthesis; adenosylcobalamin biosynthesis; adenosylcobalamin from cob(II)yrinate a,c-diamide: step 2/7. The protein is Corrinoid adenosyltransferase of Mycobacterium bovis (strain ATCC BAA-935 / AF2122/97).